We begin with the raw amino-acid sequence, 150 residues long: Macrodomain Ter protein (150 aa).

It belongs to the MatP family. In terms of assembly, homodimer.

The protein resides in the cytoplasm. Required for spatial organization of the terminus region of the chromosome (Ter macrodomain) during the cell cycle. Prevents early segregation of duplicated Ter macrodomains during cell division. Binds specifically to matS, which is a 13 bp signature motif repeated within the Ter macrodomain. The polypeptide is Macrodomain Ter protein (Erwinia tasmaniensis (strain DSM 17950 / CFBP 7177 / CIP 109463 / NCPPB 4357 / Et1/99)).